Reading from the N-terminus, the 232-residue chain is Ribonuclease 3 (232 aa).

One can recognise an RNase III domain in the interval 5–134; it reads QTVLKNHFAI…FLGALLLDKD (130 aa). Residue Glu-47 participates in Mg(2+) binding. Asp-51 is an active-site residue. Mg(2+) contacts are provided by Asp-120 and Glu-123. Residue Glu-123 is part of the active site. Residues 160-229 form the DRBM domain; it reads DYKTHLQELL…AKNAVEKGLD (70 aa).

Belongs to the ribonuclease III family. Homodimer. It depends on Mg(2+) as a cofactor.

The protein localises to the cytoplasm. It carries out the reaction Endonucleolytic cleavage to 5'-phosphomonoester.. In terms of biological role, digests double-stranded RNA. Involved in the processing of primary rRNA transcript to yield the immediate precursors to the large and small rRNAs (23S and 16S). Processes some mRNAs, and tRNAs when they are encoded in the rRNA operon. Processes pre-crRNA and tracrRNA of type II CRISPR loci if present in the organism. The protein is Ribonuclease 3 of Streptococcus pneumoniae (strain P1031).